Reading from the N-terminus, the 1379-residue chain is Attractin-like protein 1 (1379 aa).

The segment at 1-23 (METGGRARTGTPQPAAPGVWRAR) is disordered. The signal sequence occupies residues 1 to 52 (METGGRARTGTPQPAAPGVWRARPAGGGGGGASSWLLDGNSWLLCYGFLYLA). The EGF-like 1 domain maps to 53–91 (LYAQVSQSKPCERTGSCFSGRCVNSTCLCDPGWVGDQCQ). Topologically, residues 53 to 1230 (LYAQVSQSKP…FSQHNTIMDL (1178 aa)) are extracellular. Intrachain disulfides connect Cys-63-Cys-79, Cys-81-Cys-90, and Cys-93-Cys-119. N-linked (GlcNAc...) asparagine glycosylation is present at Asn-76. The CUB domain occupies 93 to 209 (CQGRFKLTEP…TGFNIFYSIN (117 aa)). N-linked (GlcNAc...) asparagine glycans are attached at residues Asn-174 and Asn-198. The EGF-like 2 domain maps to 207–245 (SINSCPNNCSGHGKCTTSVSVPSQVYCECDKYWKGEACD). 3 cysteine pairs are disulfide-bonded: Cys-211/Cys-221, Cys-215/Cys-233, and Cys-235/Cys-244. Kelch repeat units lie at residues 316–365 (FMWV…LYQE), 367–415 (IFMY…EGHS), 427–475 (VMII…SVYD), 480–531 (SIYV…LING), 533–591 (MLIF…VING), and 592–638 (SMYI…WNKN). Asn-380 is a glycosylation site (N-linked (GlcNAc...) asparagine). PSI domains are found at residues 614-657 (NCKA…AKCP), 666-709 (RCYR…TKCH), and 715-760 (ICNK…DACL). Residues 755–873 (IGDACLRVNS…TSMANGLVCE (119 aa)) form the C-type lectin domain. N-linked (GlcNAc...) asparagine glycans are attached at residues Asn-763, Asn-778, and Asn-898. Cys-776 and Cys-872 are oxidised to a cystine. PSI domains are found at residues 889–939 (PCSL…ATCS) and 942–1012 (NCSG…IQCP). 8 disulfide bridges follow: Cys-1014–Cys-1022, Cys-1016–Cys-1028, Cys-1031–Cys-1040, Cys-1043–Cys-1057, Cys-1060–Cys-1069, Cys-1062–Cys-1076, Cys-1078–Cys-1088, and Cys-1091–Cys-1106. Laminin EGF-like domains lie at 1014–1059 (CQCN…QCTA) and 1060–1108 (CTCS…TCYY). Residue Asn-1157 is glycosylated (N-linked (GlcNAc...) asparagine). A helical membrane pass occupies residues 1231–1251 (VQFFVTFFSCFLSLLLVAAVV). The Cytoplasmic segment spans residues 1252–1379 (WKIKQTCWAS…HLSTRQGTCV (128 aa)). Positions 1354–1379 (KASDSKDKTSGVRNRKHLSTRQGTCV) are disordered.

In terms of assembly, interacts with MC4R.

Its subcellular location is the membrane. May play a role in melanocortin signaling pathways that regulate energy homeostasis. This is Attractin-like protein 1 (ATRNL1) from Homo sapiens (Human).